The following is a 387-amino-acid chain: Early growth response protein 3 (387 aa).

The tract at residues proline 241 to aspartate 283 is disordered. The span at proline 269 to aspartate 283 shows a compositional bias: basic and acidic residues. 3 C2H2-type zinc fingers span residues histidine 275–histidine 299, phenylalanine 305–histidine 327, and phenylalanine 333–histidine 355. A disordered region spans residues arginine 348–alanine 387. Over residues arginine 350–glutamate 360 the composition is skewed to basic residues. Residues alanine 368–alanine 387 are compositionally biased toward low complexity.

Belongs to the EGR C2H2-type zinc-finger protein family.

The protein localises to the nucleus. Probable transcription factor involved in muscle spindle development. This chain is Early growth response protein 3 (EGR3), found in Homo sapiens (Human).